The chain runs to 381 residues: Terpene cyclase ATR13 (381 aa).

Belongs to the terpene synthase family.

Its pathway is mycotoxin biosynthesis. Its function is as follows. Terpene cyclase; part of the core atranone cluster (CAC) which products are predicted to catalyze most or all steps of mycotoxin atranone synthesis, starting from geranylgeranyl pyrophosphate (GGPP). The initial cyclization of GGPP to dolabellane is probably performed by the terpene cyclase ATR13. The Baeyer-Villiger oxidation near the end of the atranone synthesis, which converts atranones D and E to atranones F and G is predicted to be catalyzed by the monooxygenase ATR8. Of the CAC's other predicted gene products, the reducing PKS ATR6 might synthesize a polyketide chain. This polyketide is probably transferred onto the atranone backbone by the polyketide transferase ATR5. Other predicted CAC products include 4 oxygenases (ATR2, ATR3, ATR4, and ATR14), 3 short-chain reductases (ATR7, ATR9, and ATR10), and a methyltransferase (ATR12). These may all be involved in the various steps of atranone biosynthesis, although their specific roles must await experimental determination. This chain is Terpene cyclase ATR13, found in Stachybotrys chlorohalonatus (strain IBT 40285).